Here is a 92-residue protein sequence, read N- to C-terminus: Acylphosphatase (92 aa).

The Acylphosphatase-like domain occupies 5-92; the sequence is CIAAYVYGVV…ADFQGFSIRY (88 aa). Catalysis depends on residues arginine 20 and asparagine 38.

It belongs to the acylphosphatase family.

The enzyme catalyses an acyl phosphate + H2O = a carboxylate + phosphate + H(+). The polypeptide is Acylphosphatase (acyP) (Serratia proteamaculans (strain 568)).